We begin with the raw amino-acid sequence, 403 residues long: Phosphomevalonate dehydratase large subunit (403 aa).

(R)-5-phosphomevalonate is bound by residues glycine 48, valine 49, serine 50, asparagine 79, and proline 80. Cysteine 119 is a binding site for [4Fe-4S] cluster. (R)-5-phosphomevalonate contacts are provided by glutamate 138 and serine 139. Positions 301 and 358 each coordinate [4Fe-4S] cluster. Lysine 378 contributes to the (R)-5-phosphomevalonate binding site.

It belongs to the AcnX type II large subunit family. As to quaternary structure, heterodimer composed of a large subunit (PMDh-L) and a small subunit (PMDh-S). The cofactor is [4Fe-4S] cluster.

It catalyses the reaction (R)-5-phosphomevalonate = (2E)-3-methyl-5-phosphooxypent-2-enoate + H2O. It participates in isoprenoid biosynthesis; isopentenyl diphosphate biosynthesis via mevalonate pathway. Functionally, component of a hydro-lyase that catalyzes the dehydration of mevalonate 5-phosphate (MVA5P) to form trans-anhydromevalonate 5-phosphate (tAHMP). Involved in the archaeal mevalonate (MVA) pathway, which provides fundamental precursors for isoprenoid biosynthesis, such as isopentenyl diphosphate (IPP) and dimethylallyl diphosphate (DMAPP). This chain is Phosphomevalonate dehydratase large subunit, found in Methanocaldococcus jannaschii (strain ATCC 43067 / DSM 2661 / JAL-1 / JCM 10045 / NBRC 100440) (Methanococcus jannaschii).